The primary structure comprises 529 residues: Potassium voltage-gated channel subfamily A member 6 (529 aa).

The tract at residues 1–35 (MRSEKSLTLAAPGEVRGPEGEQQDAGEFQEAEGGG) is disordered. The Cytoplasmic segment spans residues 1–171 (MRSEKSLTLA…LLFEYPESSG (171 aa)). Ser3 carries the post-translational modification Phosphoserine. Positions 21–30 (EQQDAGEFQE) are enriched in acidic residues. Residues 172–193 (PARGIAIVSVLVILISIVIFCL) traverse the membrane as a helical segment. At 194–262 (ETLPQFRADG…TLGGSFFTDP (69 aa)) the chain is on the extracellular side. Positions 203–238 (GRGGSNEGSGTRLSPASRSHEEEDEDEDSYAFPGSI) are disordered. The span at 210–219 (GSGTRLSPAS) shows a compositional bias: polar residues. The chain crosses the membrane as a helical span at residues 263-284 (FFLVETLCIVWFTFELLVRFSA). The S-palmitoyl cysteine moiety is linked to residue Cys285. Residues 285-295 (CPSKAAFFRNI) lie on the Cytoplasmic side of the membrane. Residues 296–316 (MNIIDLVAIFPYFITLGTELV) traverse the membrane as a helical segment. Residues 317–337 (QRHEQQSVSGGSGQNGQQAMS) are Extracellular-facing. Residues 338–358 (LAILRVIRLVRVFRIFKLSRH) form a helical; Voltage-sensor membrane-spanning segment. Residues 359-373 (SKGLQILGKTLQASM) lie on the Cytoplasmic side of the membrane. Positions 360-373 (KGLQILGKTLQASM) are S4-S5 linker. The helical transmembrane segment at 374–395 (RELGLLIFFLFIGVILFSSAVY) threads the bilayer. Residues 396-409 (FAEADDVDSLFPSI) lie on the Extracellular side of the membrane. The segment at residues 410 to 421 (PDAFWWAVVTMT) is an intramembrane region (helical). Residues 422–427 (TVGYGD) carry the Selectivity filter motif. Residues 422-429 (TVGYGDMY) lie within the membrane without spanning it. Over 430–436 (PMTVGGK) the chain is Extracellular. The helical transmembrane segment at 437 to 465 (IVGSLCAIAGVLTIALPVPVIVSNFNYFY) threads the bilayer. Residues 466–529 (HRETEQEEQG…YAEKRMLTEV (64 aa)) lie on the Cytoplasmic side of the membrane. A disordered region spans residues 488–513 (DLKATDNGLGKPDFAEASRERRPSYL). Residues 500 to 510 (DFAEASRERRP) are compositionally biased toward basic and acidic residues. Ser511 bears the Phosphoserine; by PKA mark. The PDZ-binding motif lies at 527-529 (TEV).

The protein belongs to the potassium channel family. A (Shaker) (TC 1.A.1.2) subfamily. Kv1.6/KCNA6 sub-subfamily. Homotetramer and heterotetramer of potassium channel proteins. Interacts with KCNAB1 and KCNAB2.

It localises to the cell membrane. It catalyses the reaction K(+)(in) = K(+)(out). In terms of biological role, voltage-gated potassium channel that mediates transmembrane potassium transport in excitable membranes. Forms tetrameric potassium-selective channels through which potassium ions pass in accordance with their electrochemical gradient. The channel alternates between opened and closed conformations in response to the voltage difference across the membrane. Can form functional homotetrameric channels and heterotetrameric channels that contain variable proportions of KCNA1, KCNA2, KCNA4, KCNA6, and possibly other family members as well; channel properties depend on the type of alpha subunits that are part of the channel. Channel properties are modulated by cytoplasmic beta subunits that regulate the subcellular location of the alpha subunits and promote rapid inactivation. Homotetrameric channels display rapid activation and slow inactivation. This chain is Potassium voltage-gated channel subfamily A member 6 (Kcna6), found in Mus musculus (Mouse).